We begin with the raw amino-acid sequence, 147 residues long: Diaminohydroxyphosphoribosylamino-pyrimidine deaminase (147 aa).

A CMP/dCMP-type deaminase domain is found at 1 to 122 (MKDRFYMTRA…LYLRKKGISV (122 aa)). Residue histidine 50 participates in Zn(2+) binding. The active-site Proton donor is glutamate 52. Positions 75 and 84 each coordinate Zn(2+).

This sequence belongs to the cytidine and deoxycytidylate deaminase family. The cofactor is Zn(2+).

The catalysed reaction is 2,5-diamino-6-hydroxy-4-(5-phosphoribosylamino)-pyrimidine + H2O + H(+) = 5-amino-6-(5-phospho-D-ribosylamino)uracil + NH4(+). Its pathway is cofactor biosynthesis; riboflavin biosynthesis; 5-amino-6-(D-ribitylamino)uracil from GTP: step 2/4. This Buchnera aphidicola subsp. Schizaphis graminum (strain Sg) protein is Diaminohydroxyphosphoribosylamino-pyrimidine deaminase (ribD1).